Here is a 1285-residue protein sequence, read N- to C-terminus: Peroxidasin homolog pxn-1 (1285 aa).

The N-terminal stretch at 1–20 (MNLYLLLLVIATSSWQFVAG) is a signal peptide. Positions 21–53 (LECPVECTCDKKGLVVDCSSSGLTRIPKNISRN) constitute an LRRNT domain. LRR repeat units follow at residues 27–49 (CTCD…IPKN), 50–72 (ISRN…RSDL), 73–96 (EGFN…ENVL), 97–120 (DHLP…PLCS), 122–143 (SRPL…EQVL), 145–168 (YFPD…KLFD), and 204–227 (KVYC…SALT). An N-linked (GlcNAc...) asparagine glycan is attached at asparagine 49. Residues 180 to 228 (SNPWHCDCRASKVKALLQKVKWEKKVYCTNPVELRHQALDEVDDSALTC) form the LRRCT domain. N-linked (GlcNAc...) asparagine glycosylation occurs at asparagine 248. The disordered stretch occupies residues 305-324 (RQSQHQGNGSPQFTYKPRDN). A compositionally biased stretch (polar residues) spans 307 to 317 (SQHQGNGSPQF). Ig-like C2-type domains are found at residues 315-401 (PQFT…FSLD) and 408-495 (PNIY…AKLT). Disulfide bonds link cysteine 336-cysteine 385 and cysteine 429-cysteine 479. Residues 508–550 (QIDEELLRAIAQKARQNVENAVEKTRKQLTQDKVTNTNDLKRL) adopt a coiled-coil conformation. Asparagine 595 carries N-linked (GlcNAc...) asparagine glycosylation. A disulfide bridge links cysteine 625 with cysteine 641. Residue aspartate 719 coordinates heme b. Histidine 720 (proton acceptor) is an active-site residue. Aspartate 721 provides a ligand contact to Ca(2+). Disulfide bonds link cysteine 740–cysteine 750 and cysteine 744–cysteine 771. An N-linked (GlcNAc...) asparagine glycan is attached at asparagine 741. Ca(2+) is bound by residues threonine 803, phenylalanine 805, aspartate 807, and serine 809. Asparagine 858 carries an N-linked (GlcNAc...) asparagine glycan. 2 residues coordinate heme b: glutamate 877 and histidine 973. LRR repeat units lie at residues 998-1022 (HKAF…GLFA) and 1049-1073 (VSLD…TEYR). 2 disulfides stabilise this stretch: cysteine 1076–cysteine 1133 and cysteine 1174–cysteine 1201. An LRR 12 repeat occupies 1168 to 1189 (TLARLFCDNGDNIDRIQKDVFM).

Belongs to the peroxidase family. XPO subfamily. The cofactor is Ca(2+). It depends on heme b as a cofactor. Expressed in the ventral nerve cord, the dorsal nerve cord, head neurons, GABAergic and cholinergic neurons, body wall muscles, vulval muscles, uterine muscles, intestine, the hypodermis and in coelomocytes.

The protein resides in the secreted. It is found in the extracellular space. It localises to the extracellular matrix. It carries out the reaction L-lysyl-[collagen] + L-methionyl-[collagen] + H2O2 = [collagen]-L-lysyl-N-S-L-methionyl-[collagen] + 2 H2O + H(+). The catalysed reaction is bromide + H2O2 = hypobromite + H2O. The enzyme catalyses L-lysyl-[collagen] + L-methionyl-[collagen] + hypobromite = [collagen]-L-lysyl-N-S-L-methionyl-[collagen] + bromide + H2O + H(+). It catalyses the reaction L-tyrosyl-[protein] + bromide + H2O2 + H(+) = 3-bromo-L-tyrosyl-[protein] + 2 H2O. It carries out the reaction hypobromite + L-tyrosyl-[protein] + H(+) = 3-bromo-L-tyrosyl-[protein] + H2O. Catalyzes the two-electron oxidation of bromide by hydrogen peroxide and generates hypobromite as a reactive intermediate which mediates the formation of sulfilimine cross-links between methionine and hydroxylysine residues within an uncross-linked collagen IV NC1 hexamer. Plays a role in the attachment of tissues and in axonal guidance during early developmental stages. May functionally antagonize the peroxidasin pxn-2 to maintain neuronal development. The polypeptide is Peroxidasin homolog pxn-1 (Caenorhabditis elegans).